We begin with the raw amino-acid sequence, 209 residues long: Small ribosomal subunit protein uS3 (209 aa).

The 70-residue stretch at isoleucine 38 to lysine 107 folds into the KH type-2 domain.

This sequence belongs to the universal ribosomal protein uS3 family. Part of the 30S ribosomal subunit. Forms a tight complex with proteins S10 and S14.

Its function is as follows. Binds the lower part of the 30S subunit head. Binds mRNA in the 70S ribosome, positioning it for translation. The chain is Small ribosomal subunit protein uS3 from Fervidobacterium nodosum (strain ATCC 35602 / DSM 5306 / Rt17-B1).